The primary structure comprises 287 residues: Diaminopimelate epimerase (287 aa).

Substrate-binding residues include Asn-11, Gln-44, and Asn-64. The active-site Proton donor is Cys-73. Residues 74 to 75, Asn-157, Asn-190, and 208 to 209 contribute to the substrate site; these read GN and ER. The active-site Proton acceptor is the Cys-217. 218-219 serves as a coordination point for substrate; sequence GT.

Belongs to the diaminopimelate epimerase family. Homodimer.

It localises to the cytoplasm. It catalyses the reaction (2S,6S)-2,6-diaminopimelate = meso-2,6-diaminopimelate. The protein operates within amino-acid biosynthesis; L-lysine biosynthesis via DAP pathway; DL-2,6-diaminopimelate from LL-2,6-diaminopimelate: step 1/1. Functionally, catalyzes the stereoinversion of LL-2,6-diaminopimelate (L,L-DAP) to meso-diaminopimelate (meso-DAP), a precursor of L-lysine and an essential component of the bacterial peptidoglycan. This Halorhodospira halophila (strain DSM 244 / SL1) (Ectothiorhodospira halophila (strain DSM 244 / SL1)) protein is Diaminopimelate epimerase.